Consider the following 236-residue polypeptide: CD81 antigen (236 aa).

The Cytoplasmic segment spans residues 1 to 12 (MGVEGCTKCIKY). Residues 13 to 33 (LLFVFNFVFWLAGGVILGVAL) traverse the membrane as a helical segment. The Extracellular segment spans residues 34-63 (WLRHDPQTTNLLYLELGDKPAPNTFYVGIY). A helical transmembrane segment spans residues 64 to 84 (ILIAVGAVMMFVGFLGCYGAI). At 85-89 (QESQC) the chain is on the cytoplasmic side. A helical membrane pass occupies residues 90–112 (LLGTFFTCLVILFACEVAAGIWG). At 113-201 (FVNKDQIAKD…QKIDDLFSGK (89 aa)) the chain is on the extracellular side. Intrachain disulfides connect Cys156-Cys190 and Cys157-Cys175. The helical transmembrane segment at 202 to 224 (LYLIGIAAIVVAVIMIFEMILSM) threads the bilayer. Cholesterol is bound at residue Glu219. Over 225–236 (VLCCGIRNSSVY) the chain is Cytoplasmic.

This sequence belongs to the tetraspanin (TM4SF) family. Homodimer. Part of a complex composed of CD19, CR2/CD21, CD81 and IFITM1/CD225 in the membrane of mature B cells. Interacts (via the second extracellular domain) with CD19; this interaction is initiated early during biosynthesis in the ER and enables trafficking of only properly folded CD19. Part of a complex that includes MHC class II/HLA-DR molecules and IFITM1. Interacts with IFITM1. Interacts with IFITM2 and IFITM3. Part of integrin-tetraspanin complex composed of CD9, CD81, beta-1 and beta-2 integrins in the membrane of monocyte/macrophages. Interacts (via the second extracellular domain) with integrin ITGAV:ITGB3. Interacts with CD247/CD3 zeta, ICAM1 and CD9 at the immune synapse on T cell membrane. Part of a GPCR-tetraspanin complex consisting at least of ADGRG1, CD81, possibly CD9, and GNA11 in which CD81 enhances the association of ADGRG1 with GNA11. Part of a complex composed of CD9, CD81, PTGFRN and IGSF8. Interacts directly with IGSF8. Interacts with CD53 and SCIMP. Interacts with SAMHD1 (via its C-terminus). Interacts with glypican GPC3 and with the transcriptional repressor HHEX; binding to GPC3 decreases the availability of free CD81 for binding to HHEX, resulting in nuclear translocation of HHEX and transcriptional repression. Interacts with CLDN1. Interacts with CLDN6 and CLDN9. Post-translationally, not glycosylated. In terms of processing, likely constitutively palmitoylated at low levels. Protein palmitoylation is up-regulated upon coligation of BCR and CD9-C2R-CD81 complexes in lipid rafts.

Its subcellular location is the cell membrane. The protein resides in the basolateral cell membrane. Its function is as follows. Structural component of specialized membrane microdomains known as tetraspanin-enriched microdomains (TERMs), which act as platforms for receptor clustering and signaling. Essential for trafficking and compartmentalization of CD19 receptor on the surface of activated B cells. Upon initial encounter with microbial pathogens, enables the assembly of CD19-CR2/CD21 and B cell receptor (BCR) complexes at signaling TERMs, lowering the threshold dose of antigen required to trigger B cell clonal expansion and antibody production. In T cells, facilitates the localization of CD247/CD3 zeta at antigen-induced synapses with B cells, providing for costimulation and polarization toward T helper type 2 phenotype. Present in MHC class II compartments, may also play a role in antigen presentation. Can act both as positive and negative regulator of homotypic or heterotypic cell-cell fusion processes. Positively regulates sperm-egg fusion and may be involved in acrosome reaction. In myoblasts, associates with CD9 and PTGFRN and inhibits myotube fusion during muscle regeneration. In macrophages, associates with CD9 and beta-1 and beta-2 integrins, and prevents macrophage fusion into multinucleated giant cells specialized in ingesting complement-opsonized large particles. Also prevents the fusion of mononuclear cell progenitors into osteoclasts in charge of bone resorption. May regulate the compartmentalization of enzymatic activities. In T cells, defines the subcellular localization of dNTPase SAMHD1 and permits its degradation by the proteasome, thereby controlling intracellular dNTP levels. Also involved in cell adhesion and motility. Positively regulates integrin-mediated adhesion of macrophages, particularly relevant for the inflammatory response in the lung. The polypeptide is CD81 antigen (CD81) (Pan troglodytes (Chimpanzee)).